Reading from the N-terminus, the 377-residue chain is Anhydro-N-acetylmuramic acid kinase (377 aa).

Residue 18–25 (GTSADGID) participates in ATP binding.

The protein belongs to the anhydro-N-acetylmuramic acid kinase family.

It catalyses the reaction 1,6-anhydro-N-acetyl-beta-muramate + ATP + H2O = N-acetyl-D-muramate 6-phosphate + ADP + H(+). Its pathway is amino-sugar metabolism; 1,6-anhydro-N-acetylmuramate degradation. It participates in cell wall biogenesis; peptidoglycan recycling. In terms of biological role, catalyzes the specific phosphorylation of 1,6-anhydro-N-acetylmuramic acid (anhMurNAc) with the simultaneous cleavage of the 1,6-anhydro ring, generating MurNAc-6-P. Is required for the utilization of anhMurNAc either imported from the medium or derived from its own cell wall murein, and thus plays a role in cell wall recycling. The chain is Anhydro-N-acetylmuramic acid kinase from Xanthomonas oryzae pv. oryzae (strain MAFF 311018).